Reading from the N-terminus, the 935-residue chain is ABC transporter A family member 7 (935 aa).

7 helical membrane-spanning segments follow: residues 34 to 54 (LIMI…LFDT), 338 to 358 (IASL…FPVI), 392 to 412 (FLTI…AIGL), 424 to 444 (FVFY…VSSV), 454 to 474 (ASYI…NFLI), 483 to 503 (WIIV…YELA), and 528 to 548 (DDVF…AYYI). The segment at 571–591 (SLRRPSLQRQGSKVSVDMEKP) is disordered. Positions 613–850 (IVCDNLKKVY…YGGSYVFTMT (238 aa)) constitute an ABC transporter domain. Position 651–658 (651–658 (GPNGAGKT)) interacts with ATP.

This sequence belongs to the ABC transporter superfamily. ABCA family. CPR flippase (TC 3.A.1.211) subfamily.

The protein resides in the membrane. This is ABC transporter A family member 7 (ABCA7) from Arabidopsis thaliana (Mouse-ear cress).